Consider the following 341-residue polypeptide: NADH-quinone oxidoreductase subunit H 1 (341 aa).

8 helical membrane-spanning segments follow: residues 13–33 (LVVI…IAYI), 82–102 (GVFL…WAVI), 115–135 (VGVL…IMAG), 161–181 (IGFV…TAIV), 190–210 (LLGW…VSAL), 248–268 (YVAI…GWLP), 277–297 (WVPG…LFAM), and 317–337 (VFLP…QFAG).

This sequence belongs to the complex I subunit 1 family. NDH-1 is composed of 14 different subunits. Subunits NuoA, H, J, K, L, M, N constitute the membrane sector of the complex.

Its subcellular location is the cell inner membrane. The enzyme catalyses a quinone + NADH + 5 H(+)(in) = a quinol + NAD(+) + 4 H(+)(out). Its function is as follows. NDH-1 shuttles electrons from NADH, via FMN and iron-sulfur (Fe-S) centers, to quinones in the respiratory chain. The immediate electron acceptor for the enzyme in this species is believed to be ubiquinone. Couples the redox reaction to proton translocation (for every two electrons transferred, four hydrogen ions are translocated across the cytoplasmic membrane), and thus conserves the redox energy in a proton gradient. This subunit may bind ubiquinone. The protein is NADH-quinone oxidoreductase subunit H 1 of Rhodopseudomonas palustris (strain BisB18).